Reading from the N-terminus, the 156-residue chain is ATP synthase subunit b (156 aa).

A helical membrane pass occupies residues 11–31 (AIAFVLFVLFCMKYVWPPIMA).

This sequence belongs to the ATPase B chain family. As to quaternary structure, F-type ATPases have 2 components, F(1) - the catalytic core - and F(0) - the membrane proton channel. F(1) has five subunits: alpha(3), beta(3), gamma(1), delta(1), epsilon(1). F(0) has three main subunits: a(1), b(2) and c(10-14). The alpha and beta chains form an alternating ring which encloses part of the gamma chain. F(1) is attached to F(0) by a central stalk formed by the gamma and epsilon chains, while a peripheral stalk is formed by the delta and b chains.

The protein localises to the cell inner membrane. Its function is as follows. F(1)F(0) ATP synthase produces ATP from ADP in the presence of a proton or sodium gradient. F-type ATPases consist of two structural domains, F(1) containing the extramembraneous catalytic core and F(0) containing the membrane proton channel, linked together by a central stalk and a peripheral stalk. During catalysis, ATP synthesis in the catalytic domain of F(1) is coupled via a rotary mechanism of the central stalk subunits to proton translocation. Functionally, component of the F(0) channel, it forms part of the peripheral stalk, linking F(1) to F(0). This chain is ATP synthase subunit b, found in Proteus mirabilis (strain HI4320).